We begin with the raw amino-acid sequence, 413 residues long: Probable tRNA pseudouridine synthase D (413 aa).

Residue Asp-97 is the Nucleophile of the active site. In terms of domain architecture, TRUD spans 167–370 (AAPNYYGYQR…YGTYRRVRLE (204 aa)).

This sequence belongs to the pseudouridine synthase TruD family.

It carries out the reaction uridine(13) in tRNA = pseudouridine(13) in tRNA. Functionally, could be responsible for synthesis of pseudouridine from uracil-13 in transfer RNAs. The protein is Probable tRNA pseudouridine synthase D of Pyrobaculum aerophilum (strain ATCC 51768 / DSM 7523 / JCM 9630 / CIP 104966 / NBRC 100827 / IM2).